Reading from the N-terminus, the 98-residue chain is NADH-ubiquinone oxidoreductase chain 4L (98 aa).

3 helical membrane passes run Met-1–Phe-21, Leu-26–Leu-46, and Ala-59–Val-79.

This sequence belongs to the complex I subunit 4L family. In terms of assembly, core subunit of respiratory chain NADH dehydrogenase (Complex I) which is composed of 45 different subunits.

It is found in the mitochondrion inner membrane. The catalysed reaction is a ubiquinone + NADH + 5 H(+)(in) = a ubiquinol + NAD(+) + 4 H(+)(out). Functionally, core subunit of the mitochondrial membrane respiratory chain NADH dehydrogenase (Complex I) which catalyzes electron transfer from NADH through the respiratory chain, using ubiquinone as an electron acceptor. Part of the enzyme membrane arm which is embedded in the lipid bilayer and involved in proton translocation. The chain is NADH-ubiquinone oxidoreductase chain 4L (mt-nd4l) from Danio rerio (Zebrafish).